The following is a 327-amino-acid chain: Vacuolar protein sorting-associated protein 26A (327 aa).

The tract at residues 306–327 is disordered; that stretch reads RTNFHQRFESPESQASAEQPEM. Ser-315 is modified (phosphoserine). Positions 316–327 are enriched in polar residues; it reads PESQASAEQPEM.

It belongs to the VPS26 family. Component of the heterotrimeric retromer cargo-selective complex (CSC), also described as vacuolar protein sorting subcomplex (VPS), formed by VPS26 (VPS26A or VPS26B), VPS29 and VPS35. The CSC has a highly elongated structure with VPS26 and VPS29 binding independently at opposite distal ends of VPS35 as central platform. The CSC is believed to associate with variable sorting nexins to form functionally distinct retromer complex variants. The originally described retromer complex (also called SNX-BAR retromer) is a pentamer containing the CSC and a heterodimeric membrane-deforming subcomplex formed between SNX1 or SNX2 and SNX5 or SNX6 (also called SNX-BAR subcomplex); the respective CSC and SNX-BAR subcomplexes associate with low affinity. The CSC associates with SNX3 to form a SNX3-retromer complex. The CSC associates with SNX27, the WASH complex and the SNX-BAR subcomplex to form the SNX27-retromer complex. Interacts with VPS29, VPS35, SNX1, SNX2, SNX5, SNX6, SNX3, SNX27, RAB7A, ECPAS, EHD1, WASHC5, SORL1.

Its subcellular location is the cytoplasm. The protein localises to the endosome membrane. The protein resides in the early endosome. Functionally, acts as a component of the retromer cargo-selective complex (CSC). The CSC is believed to be the core functional component of retromer or respective retromer complex variants acting to prevent missorting of selected transmembrane cargo proteins into the lysosomal degradation pathway. The recruitment of the CSC to the endosomal membrane involves RAB7A and SNX3. The SNX-BAR retromer mediates retrograde transport of cargo proteins from endosomes to the trans-Golgi network (TGN) and is involved in endosome-to-plasma membrane transport for cargo protein recycling. The SNX3-retromer mediates the retrograde endosome-to-TGN transport of WLS distinct from the SNX-BAR retromer pathway. The SNX27-retromer is believed to be involved in endosome-to-plasma membrane trafficking and recycling of a broad spectrum of cargo proteins. The CSC seems to act as recruitment hub for other proteins, such as the WASH complex and TBC1D5. Required for retrograde transport of lysosomal enzyme receptor IGF2R. Required to regulate transcytosis of the polymeric immunoglobulin receptor (pIgR-pIgA). Required for the endosomal localization of WASHC2A (indicative for the WASH complex). Required for the endosomal localization of TBC1D5. Mediates retromer cargo recognition of SORL1 and is involved in trafficking of SORL1 implicated in sorting and processing of APP. Involved in retromer-independent lysosomal sorting of F2R. Involved in recycling of ADRB2. Enhances the affinity of SNX27 for PDZ-binding motifs in cargo proteins. The sequence is that of Vacuolar protein sorting-associated protein 26A from Homo sapiens (Human).